The primary structure comprises 227 residues: Orotidine 5'-phosphate decarboxylase (227 aa).

Residues D8, K30, 58–67 (DLKVHDIPNT), T117, R177, Q186, G206, and R207 each bind substrate. K60 acts as the Proton donor in catalysis.

Belongs to the OMP decarboxylase family. Type 1 subfamily. Homodimer.

It carries out the reaction orotidine 5'-phosphate + H(+) = UMP + CO2. Its pathway is pyrimidine metabolism; UMP biosynthesis via de novo pathway; UMP from orotate: step 2/2. In terms of biological role, catalyzes the decarboxylation of orotidine 5'-monophosphate (OMP) to uridine 5'-monophosphate (UMP). This Campylobacter fetus subsp. fetus (strain 82-40) protein is Orotidine 5'-phosphate decarboxylase.